Here is a 1105-residue protein sequence, read N- to C-terminus: Lysylphosphatidylglycerol biosynthesis bifunctional protein LysX (1105 aa).

The interval 1–603 (MTVTKPRSVQ…LLHHDGSAPD (603 aa)) is phosphatidylglycerol lysyltransferase. A run of 7 helical transmembrane segments spans residues 20-40 (VPAA…LASI), 62-82 (FPDT…ALAA), 86-106 (IAWL…AADI), 117-137 (FGEN…VLGY), 154-174 (AVLV…VDLF), 186-203 (YVAN…DLFT), and 208-228 (VFLN…ATIV). The lysine--tRNA ligase stretch occupies residues 604–1105 (VSGLRQSAIA…TLPFPLAKPH (502 aa)). The Mg(2+) site is built by aspartate 1017 and glutamate 1024.

This sequence in the N-terminal section; belongs to the LPG synthetase family. The protein in the C-terminal section; belongs to the class-II aminoacyl-tRNA synthetase family. Mg(2+) is required as a cofactor.

It is found in the cell membrane. The catalysed reaction is tRNA(Lys) + L-lysine + ATP = L-lysyl-tRNA(Lys) + AMP + diphosphate. It catalyses the reaction L-lysyl-tRNA(Lys) + a 1,2-diacyl-sn-glycero-3-phospho-(1'-sn-glycerol) = a 1,2-diacyl-sn-glycero-3-phospho-1'-(3'-O-L-lysyl)-sn-glycerol + tRNA(Lys). Functionally, catalyzes the production of L-lysyl-tRNA(Lys)transfer and the transfer of a lysyl group from L-lysyl-tRNA(Lys) to membrane-bound phosphatidylglycerol (PG), which produces lysylphosphatidylglycerol (LPG), one of the components of the bacterial membrane with a positive net charge. LPG synthesis contributes to the resistance to cationic antimicrobial peptides (CAMPs) and likely protects M.tuberculosis against the CAMPs produced by competiting microorganisms (bacteriocins). In fact, the modification of anionic phosphatidylglycerol with positively charged L-lysine results in repulsion of the peptides. This chain is Lysylphosphatidylglycerol biosynthesis bifunctional protein LysX (lysX), found in Mycobacterium ulcerans (strain Agy99).